A 21-amino-acid polypeptide reads, in one-letter code: Ferredoxin (21 aa).

Positions 2 to 21 (KVKVDADACIGCGVCVELCP) constitute a 4Fe-4S ferredoxin-type domain. The [4Fe-4S] cluster site is built by Cys10, Cys13, and Cys16.

As to quaternary structure, monomer. [4Fe-4S] cluster serves as cofactor.

Functionally, ferredoxins are iron-sulfur proteins that transfer electrons in a wide variety of metabolic reactions. The sequence is that of Ferredoxin (fdxA) from Pyrococcus woesei.